Consider the following 120-residue polypeptide: Large ribosomal subunit protein uL14 (120 aa).

This sequence belongs to the universal ribosomal protein uL14 family. In terms of assembly, part of the 50S ribosomal subunit. Forms a cluster with proteins L3 and L19. In the 70S ribosome, L14 and L19 interact and together make contacts with the 16S rRNA in bridges B5 and B8.

Functionally, binds to 23S rRNA. Forms part of two intersubunit bridges in the 70S ribosome. The chain is Large ribosomal subunit protein uL14 from Phytoplasma australiense.